The sequence spans 221 residues: Ribosomal RNA large subunit methyltransferase E (221 aa).

Gly-60, Trp-62, Asp-89, Asp-105, and Asp-134 together coordinate S-adenosyl-L-methionine. Lys-174 acts as the Proton acceptor in catalysis. Residues 199 to 221 form a disordered region; the sequence is KPKASRDKSSETFLLGRQLKHPG.

The protein belongs to the class I-like SAM-binding methyltransferase superfamily. RNA methyltransferase RlmE family.

It localises to the cytoplasm. It carries out the reaction uridine(2552) in 23S rRNA + S-adenosyl-L-methionine = 2'-O-methyluridine(2552) in 23S rRNA + S-adenosyl-L-homocysteine + H(+). Specifically methylates the uridine in position 2552 of 23S rRNA at the 2'-O position of the ribose in the fully assembled 50S ribosomal subunit. This chain is Ribosomal RNA large subunit methyltransferase E, found in Ralstonia pickettii (strain 12J).